The chain runs to 111 residues: Phosphoribosyl-ATP pyrophosphatase (111 aa).

It belongs to the PRA-PH family.

Its subcellular location is the cytoplasm. The enzyme catalyses 1-(5-phospho-beta-D-ribosyl)-ATP + H2O = 1-(5-phospho-beta-D-ribosyl)-5'-AMP + diphosphate + H(+). Its pathway is amino-acid biosynthesis; L-histidine biosynthesis; L-histidine from 5-phospho-alpha-D-ribose 1-diphosphate: step 2/9. The protein is Phosphoribosyl-ATP pyrophosphatase of Pseudomonas entomophila (strain L48).